Reading from the N-terminus, the 495-residue chain is Glucokinase (495 aa).

Residues 3 to 483 form the Hexokinase domain; the sequence is SALLDEAARI…SGVGAALIAL (481 aa). A hexokinase small subdomain region spans residues 57-206; it reads NGTEKGLYLA…GLPVRVAALV (150 aa). Residue lysine 93 coordinates ATP. The tract at residues 149–175 is glucose-binding; the sequence is DLGFTFSFPVRQLGINKGTLIRWTKGF. The segment at 207–472 is hexokinase large subdomain; it reads NDTVGTLMAR…KKIRIGISKD (266 aa). 472 to 477 serves as a coordination point for ATP; that stretch reads DGSGVG.

This sequence belongs to the hexokinase family. As to quaternary structure, monomer.

The catalysed reaction is D-glucose + ATP = D-glucose 6-phosphate + ADP + H(+). It carries out the reaction a D-hexose + ATP = a D-hexose 6-phosphate + ADP + H(+). The enzyme catalyses D-mannose + ATP = D-mannose 6-phosphate + ADP + H(+). It catalyses the reaction D-glucosamine + ATP = D-glucosamine 6-phosphate + ADP + H(+). The protein operates within carbohydrate metabolism; hexose metabolism. It functions in the pathway carbohydrate degradation; glycolysis; D-glyceraldehyde 3-phosphate and glycerone phosphate from D-glucose: step 1/4. In terms of biological role, the enzyme has great affinity for glucose. Mannose, 2-deoxyglucose and glucosamine can serve as substrates. This is Glucokinase (glkA) from Aspergillus niger.